A 305-amino-acid polypeptide reads, in one-letter code: tRNA uridine(34) hydroxylase (305 aa).

In terms of domain architecture, Rhodanese spans Ala-125 to Ser-219. Cys-179 (cysteine persulfide intermediate) is an active-site residue.

It belongs to the TrhO family.

It carries out the reaction uridine(34) in tRNA + AH2 + O2 = 5-hydroxyuridine(34) in tRNA + A + H2O. Functionally, catalyzes oxygen-dependent 5-hydroxyuridine (ho5U) modification at position 34 in tRNAs. The protein is tRNA uridine(34) hydroxylase of Brucella anthropi (strain ATCC 49188 / DSM 6882 / CCUG 24695 / JCM 21032 / LMG 3331 / NBRC 15819 / NCTC 12168 / Alc 37) (Ochrobactrum anthropi).